The primary structure comprises 383 residues: tRNA-specific 2-thiouridylase MnmA (383 aa).

ATP is bound by residues 30–37 (GMSGGVDS) and Met56. An interaction with target base in tRNA region spans residues 116–118 (NPD). The Nucleophile role is filled by Cys121. Cys121 and Cys218 form a disulfide bridge. Gly146 provides a ligand contact to ATP. Positions 168–170 (KDQ) are interaction with tRNA. Residue Cys218 is the Cysteine persulfide intermediate of the active site. Residues 330-331 (RY) form an interaction with tRNA region.

The protein belongs to the MnmA/TRMU family.

It localises to the cytoplasm. The enzyme catalyses S-sulfanyl-L-cysteinyl-[protein] + uridine(34) in tRNA + AH2 + ATP = 2-thiouridine(34) in tRNA + L-cysteinyl-[protein] + A + AMP + diphosphate + H(+). In terms of biological role, catalyzes the 2-thiolation of uridine at the wobble position (U34) of tRNA, leading to the formation of s(2)U34. In Haemophilus influenzae (strain 86-028NP), this protein is tRNA-specific 2-thiouridylase MnmA.